The following is a 477-amino-acid chain: Aspartyl/glutamyl-tRNA(Asn/Gln) amidotransferase subunit B (477 aa).

The protein belongs to the GatB/GatE family. GatB subfamily. Heterotrimer of A, B and C subunits.

The catalysed reaction is L-glutamyl-tRNA(Gln) + L-glutamine + ATP + H2O = L-glutaminyl-tRNA(Gln) + L-glutamate + ADP + phosphate + H(+). The enzyme catalyses L-aspartyl-tRNA(Asn) + L-glutamine + ATP + H2O = L-asparaginyl-tRNA(Asn) + L-glutamate + ADP + phosphate + 2 H(+). Allows the formation of correctly charged Asn-tRNA(Asn) or Gln-tRNA(Gln) through the transamidation of misacylated Asp-tRNA(Asn) or Glu-tRNA(Gln) in organisms which lack either or both of asparaginyl-tRNA or glutaminyl-tRNA synthetases. The reaction takes place in the presence of glutamine and ATP through an activated phospho-Asp-tRNA(Asn) or phospho-Glu-tRNA(Gln). This Lactococcus lactis subsp. cremoris (strain MG1363) protein is Aspartyl/glutamyl-tRNA(Asn/Gln) amidotransferase subunit B.